The chain runs to 370 residues: MTARNLFLLPGDGIGPEAMGEVRKIIAYMNEAMDAGFVTDEGLVGGCAYDAHGAAISEADMQKALAADAVLFGAVGGPKWDSVPYEVRPEAGLLRLRKDLQLFANLRPAICYPALASASSLKPELVEGLDILIIRELTGGVYFGEPKEIIDLGNGQKRGIDTQVYDTYEIERIAGVAFEMARTRQNRVCSMEKRNVMKSGVLWNQVVTETHKAKYSDVQLEHMLADAGGMQLVRQPKQFDVIVTDNLFGDMLSDVAAMLTGSLGMLPSASLGAPDGKTGKRKALYEPVHGSAPDIAGKGIANPIAMIASFAMCLRYSFNMVKEADDLEKAIANVLDKGIRTGDIMADGCRQVGTVEMGEAILAEFKALSA.

Glycine 77–glutamate 90 contacts NAD(+). The substrate site is built by arginine 97, arginine 107, arginine 135, and aspartate 226. Mg(2+) contacts are provided by aspartate 226, aspartate 250, and aspartate 254. NAD(+) is bound at residue glycine 290–asparagine 302.

Belongs to the isocitrate and isopropylmalate dehydrogenases family. LeuB type 1 subfamily. As to quaternary structure, homodimer. The cofactor is Mg(2+). Requires Mn(2+) as cofactor.

It localises to the cytoplasm. It catalyses the reaction (2R,3S)-3-isopropylmalate + NAD(+) = 4-methyl-2-oxopentanoate + CO2 + NADH. It participates in amino-acid biosynthesis; L-leucine biosynthesis; L-leucine from 3-methyl-2-oxobutanoate: step 3/4. Its function is as follows. Catalyzes the oxidation of 3-carboxy-2-hydroxy-4-methylpentanoate (3-isopropylmalate) to 3-carboxy-4-methyl-2-oxopentanoate. The product decarboxylates to 4-methyl-2 oxopentanoate. The chain is 3-isopropylmalate dehydrogenase from Rhizobium etli (strain ATCC 51251 / DSM 11541 / JCM 21823 / NBRC 15573 / CFN 42).